Reading from the N-terminus, the 342-residue chain is Heat-inducible transcription repressor HrcA (342 aa).

It belongs to the HrcA family.

Its function is as follows. Negative regulator of class I heat shock genes (grpE-dnaK-dnaJ and groELS operons). Prevents heat-shock induction of these operons. The protein is Heat-inducible transcription repressor HrcA of Leptospira interrogans serogroup Icterohaemorrhagiae serovar copenhageni (strain Fiocruz L1-130).